A 476-amino-acid chain; its full sequence is Serine/threonine-protein kinase Chk1 (476 aa).

The tract at residues 1 to 265 (MAVPFVEDWD…IPDIKKDRWY (265 aa)) is interaction with CLSPN. Residues 9 to 265 (WDLVQTLGEG…IPDIKKDRWY (257 aa)) enclose the Protein kinase domain. ATP-binding positions include 15–23 (LGEGAYGEV) and K38. Residue D130 is the Proton acceptor of the active site. K132 participates in a covalent cross-link: Glycyl lysine isopeptide (Lys-Gly) (interchain with G-Cter in ubiquitin). The interval 267-331 (KPLNRGAKRP…RTGLSLWDTG (65 aa)) is disordered. At S280 the chain carries Phosphoserine; by PKB/AKT1. Positions 280–291 (SGGMSESSSGFS) are enriched in low complexity. Residues S286, S296, and S301 each carry the phosphoserine modification. The span at 298–320 (LDFSPVNNGSSEETVKFSSSQPE) shows a compositional bias: polar residues. At S317 the chain carries Phosphoserine; by ATM and ATR. The residue at position 345 (S345) is a Phosphoserine; by ATR. The segment at 391–476 (QCLKETFEKL…SSQKVWFPVT (86 aa)) is autoinhibitory region. Residue K436 forms a Glycyl lysine isopeptide (Lys-Gly) (interchain with G-Cter in ubiquitin) linkage. S463, S467, and S468 each carry phosphoserine.

It belongs to the protein kinase superfamily. CAMK Ser/Thr protein kinase family. NIM1 subfamily. In terms of assembly, interacts (phosphorylated by ATR) with RAD51. Interacts with and phosphorylates CLSPN, an adapter protein that regulates the ATR-dependent phosphorylation of CHEK1. Interacts with BRCA1. Interacts with and phosphorylates CDC25A, CDC25B and CDC25C. Interacts with FBXO6, which regulates CHEK1. Interacts with PPM1D, which regulates CHEK1 through dephosphorylation. Interacts with TIMELESS; DNA damage-dependent. Interacts with FEM1B; activates CHEK1 in response to stress. Interacts with TLK1. Interacts with XPO1 and YWHAZ. Interacts with CDK5RAP3; antagonizes CHEK1. Phosphorylated by ATR in a RAD17-dependent manner in response to ultraviolet irradiation and inhibition of DNA replication. Phosphorylated by ATM in response to ionizing irradiation. ATM and ATR can both phosphorylate Ser-317 and Ser-345 and this results in enhanced kinase activity. Phosphorylation at Ser-345 induces a change in the conformation of the protein, activates the kinase activity and is a prerequisite for interaction with FBXO6 and subsequent ubiquitination at Lys-436. Phosphorylation at Ser-345 also increases binding to 14-3-3 proteins and promotes nuclear retention. Conversely, dephosphorylation at Ser-345 by PPM1D may contribute to exit from checkpoint mediated cell cycle arrest. Phosphorylation at Ser-280 by AKT1/PKB, may promote mono and/or diubiquitination. Also phosphorylated at undefined residues during mitotic arrest, resulting in decreased activity. In terms of processing, ubiquitinated. Mono or diubiquitination promotes nuclear exclusion. The activated form (phosphorylated on Ser-345) is polyubiquitinated at Lys-436 by some SCF-type E3 ubiquitin ligase complex containing FBXO6 promoting its degradation. Ubiquitination and degradation are required to terminate the checkpoint and ensure that activated CHEK1 does not accumulate as cells progress through S phase, when replication forks encounter transient impediments during normal DNA replication. 'Lys-63'-mediated ubiquitination by TRAF4 at Lys-132 activates cell cycle arrest and activation of DNA repair. Post-translationally, proteolytically cleaved at the C-terminus by SPRTN during normal DNA replication, thereby promoting CHEK1 removal from chromatin and activating the protein kinase activity. Found in all adult tissues tested. Elevated expression in testis, lung and spleen. 15.5 day old embryos show ubiquitous expression with strong expression in brain, liver, kidney, pancreas, intestine, thymus and lung.

It localises to the nucleus. Its subcellular location is the chromosome. It is found in the cytoplasm. The protein localises to the cytoskeleton. The protein resides in the microtubule organizing center. It localises to the centrosome. It catalyses the reaction L-seryl-[protein] + ATP = O-phospho-L-seryl-[protein] + ADP + H(+). It carries out the reaction L-threonyl-[protein] + ATP = O-phospho-L-threonyl-[protein] + ADP + H(+). With respect to regulation, activated through phosphorylation predominantly by ATR but also by ATM in response to DNA damage or inhibition of DNA replication. Activation is modulated by several mediators including CLSPN, BRCA1 and FEM1B. Proteolytic cleavage at the C-terminus by SPRTN during normal DNA replication activates the protein kinase activity. In terms of biological role, serine/threonine-protein kinase which is required for checkpoint-mediated cell cycle arrest and activation of DNA repair in response to the presence of DNA damage or unreplicated DNA. May also negatively regulate cell cycle progression during unperturbed cell cycles. This regulation is achieved by a number of mechanisms that together help to preserve the integrity of the genome. Recognizes the substrate consensus sequence [R-X-X-S/T]. Binds to and phosphorylates CDC25A, CDC25B and CDC25C. Phosphorylation of CDC25A at 'Ser-178' and 'Thr-507' and phosphorylation of CDC25C at 'Ser-216' creates binding sites for 14-3-3 proteins which inhibit CDC25A and CDC25C. Phosphorylation of CDC25A at 'Ser-76', 'Ser-124', 'Ser-178', 'Ser-279' and 'Ser-293' promotes proteolysis of CDC25A. Phosphorylation of CDC25A at 'Ser-76' primes the protein for subsequent phosphorylation at 'Ser-79', 'Ser-82' and 'Ser-88' by NEK11, which is required for polyubiquitination and degradation of CDCD25A. Inhibition of CDC25 leads to increased inhibitory tyrosine phosphorylation of CDK-cyclin complexes and blocks cell cycle progression. Also phosphorylates NEK6. Binds to and phosphorylates RAD51 at 'Thr-309', which promotes the release of RAD51 from BRCA2 and enhances the association of RAD51 with chromatin, thereby promoting DNA repair by homologous recombination. Phosphorylates multiple sites within the C-terminus of TP53, which promotes activation of TP53 by acetylation and promotes cell cycle arrest and suppression of cellular proliferation. Also promotes repair of DNA cross-links through phosphorylation of FANCE. Binds to and phosphorylates TLK1 at 'Ser-743', which prevents the TLK1-dependent phosphorylation of the chromatin assembly factor ASF1A. This may enhance chromatin assembly both in the presence or absence of DNA damage. May also play a role in replication fork maintenance through regulation of PCNA. May regulate the transcription of genes that regulate cell-cycle progression through the phosphorylation of histones. Phosphorylates histone H3.1 (to form H3T11ph), which leads to epigenetic inhibition of a subset of genes. May also phosphorylate RB1 to promote its interaction with the E2F family of transcription factors and subsequent cell cycle arrest. Phosphorylates SPRTN, promoting SPRTN recruitment to chromatin. Reduces replication stress and activates the G2/M checkpoint, by phosphorylating and inactivating PABIR1/FAM122A and promoting the serine/threonine-protein phosphatase 2A-mediated dephosphorylation and stabilization of WEE1 levels and activity. This Mus musculus (Mouse) protein is Serine/threonine-protein kinase Chk1 (Chek1).